We begin with the raw amino-acid sequence, 133 residues long: Putative esterase STK_17900 (133 aa).

It belongs to the thioesterase PaaI family.

The polypeptide is Putative esterase STK_17900 (Sulfurisphaera tokodaii (strain DSM 16993 / JCM 10545 / NBRC 100140 / 7) (Sulfolobus tokodaii)).